Here is a 557-residue protein sequence, read N- to C-terminus: MNYKQPLIVKSQQQALSALRNLKMQTQDTHLNQFFSDDSGRFERFSVEQEQLVLDFSKHRIDQNVLNGLVDLAHAQDLTQWIQRLFSLEEINYTEQRAAMHWALRVPEQNQQVLPEITAQVHTQLERMYSLVEKIHAGQYRGATGEVIQDVVNIGVGGSDLGPLMVTHALSDFKVVTAKPLDVHFVSTMDGSQLSDLLHQLRPETTLFIISSKSFGTIDTLSNAQTVRQWLEKALGKNSHVLKHHFIGVSTKPDKMSEWGIAPENQLLLWDWVGGRYSLWSCIGLPIALTVGVDGFKQLLSGAYAIDQHFQTAPFAQNIPVLIGLLGVWNNNFLDIQTHAVLPYDGRLKYFAAYLQQLEMESNGKSTQRSGEKVDSATCPIVWGEVGPNAQHAFYQLLHQGTHKVSCDFIAPVKRYNANHFTYAENAEALIEQHHLALSNCLAQSRLLAFGNQALTADEIEDLPTYKQYEGNQPSSTILLKELNPYSLGMLIATYEHKVFVQSVLWNINPFDQWGVEKGKEIANQLLPILNREQDDLSTFDASTQGLLKILLGKNNG.

The active-site Proton donor is Glu361. Residues His392 and Lys520 contribute to the active site.

It belongs to the GPI family.

The protein localises to the cytoplasm. It carries out the reaction alpha-D-glucose 6-phosphate = beta-D-fructose 6-phosphate. It functions in the pathway carbohydrate biosynthesis; gluconeogenesis. It participates in carbohydrate degradation; glycolysis; D-glyceraldehyde 3-phosphate and glycerone phosphate from D-glucose: step 2/4. In terms of biological role, catalyzes the reversible isomerization of glucose-6-phosphate to fructose-6-phosphate. The protein is Glucose-6-phosphate isomerase of Acinetobacter venetianus (strain ATCC 31012 / DSM 23050 / BCRC 14357 / CCUG 45561 / CIP 110063 / KCTC 2702 / LMG 19082 / RAG-1).